Reading from the N-terminus, the 407-residue chain is Probable tRNA sulfurtransferase (407 aa).

The region spanning 61–165 (NEITYRLSKI…LDAIYMYEEV (105 aa)) is the THUMP domain. Residues 183–184 (ML), 208–209 (HF), R265, G287, and Q296 each bind ATP.

Belongs to the ThiI family.

The protein resides in the cytoplasm. It catalyses the reaction [ThiI sulfur-carrier protein]-S-sulfanyl-L-cysteine + a uridine in tRNA + 2 reduced [2Fe-2S]-[ferredoxin] + ATP + H(+) = [ThiI sulfur-carrier protein]-L-cysteine + a 4-thiouridine in tRNA + 2 oxidized [2Fe-2S]-[ferredoxin] + AMP + diphosphate. It carries out the reaction [ThiS sulfur-carrier protein]-C-terminal Gly-Gly-AMP + S-sulfanyl-L-cysteinyl-[cysteine desulfurase] + AH2 = [ThiS sulfur-carrier protein]-C-terminal-Gly-aminoethanethioate + L-cysteinyl-[cysteine desulfurase] + A + AMP + 2 H(+). Its pathway is cofactor biosynthesis; thiamine diphosphate biosynthesis. In terms of biological role, catalyzes the ATP-dependent transfer of a sulfur to tRNA to produce 4-thiouridine in position 8 of tRNAs, which functions as a near-UV photosensor. Also catalyzes the transfer of sulfur to the sulfur carrier protein ThiS, forming ThiS-thiocarboxylate. This is a step in the synthesis of thiazole, in the thiamine biosynthesis pathway. The sulfur is donated as persulfide by IscS. The protein is Probable tRNA sulfurtransferase of Staphylococcus aureus (strain NCTC 8325 / PS 47).